A 344-amino-acid chain; its full sequence is MMVIRPVERSDVSALMQLASKTGGGLTSLPANEATLSARIERAIKTWQGELPKSEQGYVFVLEDSETGTVAGICAIEVAVGLNDPWYNYRVGTLVHASKELNVYNALPTLFLSNDHTGSSELCTLFLDPDWRKEGNGYLLSKSRFMFMAAFRDKFNDKVVAEMRGVIDEHGYSPFWQSLGKRFFSMDFSRADFLCGTGQKAFIAELMPKHPIYTHFLSQEAQDVIGQVHPQTAPARAVLEKEGFRYRNYIDIFDGGPTLECDIDRVRAIRKSRLVEVAEGQPAQGDFPACLVANENYHHFRVVLARTDPATERLILTAEQLDALKCHAGDRVRLVRLCAEEKTA.

Leu-125 serves as a coordination point for succinyl-CoA. His-229 functions as the Proton donor in the catalytic mechanism.

The protein belongs to the arginine N-succinyltransferase family.

The enzyme catalyses succinyl-CoA + L-arginine = N(2)-succinyl-L-arginine + CoA + H(+). Its pathway is amino-acid degradation; L-arginine degradation via AST pathway; L-glutamate and succinate from L-arginine: step 1/5. In terms of biological role, catalyzes the transfer of succinyl-CoA to arginine to produce N(2)-succinylarginine. The sequence is that of Arginine N-succinyltransferase from Escherichia coli (strain 55989 / EAEC).